Reading from the N-terminus, the 448-residue chain is MALEKLGQALNSALKKLARSSTVDEATIKEIVRDIQRALLQADVNVKLVLQLTKQIQKRALEEEPPAGVSKKEHIIKIVYEELTKFLGTEAKPLEIKHKPTVILTVGIQGSGKTTSVAKLARYLQKRGYKVGVVCSDTWRPGAYYQLRQLLDPFGIEVFGDPEEKDAVKLAREGVEHFREKGVDVIIVDSAGRHKEEKGLIEEMRQISEAIKPHEVILVIDGTIGQQAYNQAMAFKEATPIGSIIVTKLDGSAKGGGALSAVAATGAPIKFIGTGERIDDLEPFDPKRFVSRLLGLGDIQGLLEKIEELQKEQEFREEDMEKFLRGKFNLKDMYAQLEAMQKMGPLKQILQMIPGLGYSLPEDAVRVGEEKLKRYKVIMDSMTEEELENPEIINYSRIKRIARGSGATTAEVRELLNQYNQMKKMFKSLNKRKLAKMAKKFNFGGLGI.

Residues 107–114 (GIQGSGKT), 189–193 (DSAGR), and 247–250 (TKLD) each bind GTP.

It belongs to the GTP-binding SRP family. SRP54 subfamily. In terms of assembly, part of the signal recognition particle protein translocation system, which is composed of SRP and FtsY. Archaeal SRP consists of a 7S RNA molecule of 300 nucleotides and two protein subunits: SRP54 and SRP19.

The protein resides in the cytoplasm. It catalyses the reaction GTP + H2O = GDP + phosphate + H(+). Involved in targeting and insertion of nascent membrane proteins into the cytoplasmic membrane. Binds to the hydrophobic signal sequence of the ribosome-nascent chain (RNC) as it emerges from the ribosomes. The SRP-RNC complex is then targeted to the cytoplasmic membrane where it interacts with the SRP receptor FtsY. This is Signal recognition particle 54 kDa protein from Thermococcus kodakarensis (strain ATCC BAA-918 / JCM 12380 / KOD1) (Pyrococcus kodakaraensis (strain KOD1)).